We begin with the raw amino-acid sequence, 206 residues long: Large ribosomal subunit protein bL17 (206 aa).

Residues 130–141 (ERARGTRFEARR) are compositionally biased toward basic and acidic residues. Residues 130-206 (ERARGTRFEA…SGAGEQNSAN (77 aa)) are disordered. Low complexity-rich tracts occupy residues 160 to 181 (TAAA…GAAG) and 189 to 200 (DDSGIGDDSGAG).

Belongs to the bacterial ribosomal protein bL17 family. As to quaternary structure, part of the 50S ribosomal subunit. Contacts protein L32.

This is Large ribosomal subunit protein bL17 from Frankia casuarinae (strain DSM 45818 / CECT 9043 / HFP020203 / CcI3).